The chain runs to 72 residues: DNA-directed RNA polymerase subunit omega (72 aa).

It belongs to the RNA polymerase subunit omega family. The RNAP catalytic core consists of 2 alpha, 1 beta, 1 beta' and 1 omega subunit. When a sigma factor is associated with the core the holoenzyme is formed, which can initiate transcription.

It catalyses the reaction RNA(n) + a ribonucleoside 5'-triphosphate = RNA(n+1) + diphosphate. Its function is as follows. Promotes RNA polymerase assembly. Latches the N- and C-terminal regions of the beta' subunit thereby facilitating its interaction with the beta and alpha subunits. This chain is DNA-directed RNA polymerase subunit omega, found in Clostridium beijerinckii (strain ATCC 51743 / NCIMB 8052) (Clostridium acetobutylicum).